Here is a 690-residue protein sequence, read N- to C-terminus: MPRVHAIEDYRNFGIMAHIDAGKTTTTERILYYTGKSHKIGEVHEGAATMDWMEQEQERGITITSAATTAFWNGKRLNIIDTPGHVDFTIEVERSLRVLDGAVCVLDSNQGVEPQTETVWRQGDKYRVPRIVFANKMDKTGADFFKCLQDIIDRLGAKPVAIQLPIGSENNFKGLIDLVRMKAVVWSDESLGAKFEDTEIPEDLLEQAKEYREKMIEAAVELDDDAMAAYLDGTEPEEAVLKRLIRKAVLTGAFYPVLCGSAFKNKGVQPLLDAVVDYLPSPVDVPAIKGIDEDGNEVTRHADDKEPLSLLAFKIMDDPFVGTITFCRIYSGVLQSGTGVVNSTREKKERIGRMLLMHANNREDIKEAYAGDIVALAGLKEARTGDTLCDPQKQVILEKMEFPEPVIEIAIEPKSKADQEKLGVALAKLAAEDPSFRVSTDLESGQTILKGMGELHLDIKVDILRRTYKVDANIGAPQVAFRERITKRAEVDYTHKKQTGGTGQFAAVKFIVEPNEPGGGYVFESKIVGGAVPKEYIPGVEKGIESVLSSGVVAGFPVVDVKVSLIDGKYHDVDSSALAFEIASRAAFREALQKGKSVLLEPIMKVECVTPEDYTGSVIGDLNSRRGQIQGQDMRGNANVINAMVPLMNMFGYVNNLRSMSQGRATFTMQFDHYAEAPANVSAEVQKKFA.

One can recognise a tr-type G domain in the interval 8 to 283 (EDYRNFGIMA…AVVDYLPSPV (276 aa)). Residues 17 to 24 (AHIDAGKT), 81 to 85 (DTPGH), and 135 to 138 (NKMD) each bind GTP.

It belongs to the TRAFAC class translation factor GTPase superfamily. Classic translation factor GTPase family. EF-G/EF-2 subfamily.

The protein localises to the cytoplasm. In terms of biological role, catalyzes the GTP-dependent ribosomal translocation step during translation elongation. During this step, the ribosome changes from the pre-translocational (PRE) to the post-translocational (POST) state as the newly formed A-site-bound peptidyl-tRNA and P-site-bound deacylated tRNA move to the P and E sites, respectively. Catalyzes the coordinated movement of the two tRNA molecules, the mRNA and conformational changes in the ribosome. This is Elongation factor G from Rhodopseudomonas palustris (strain BisA53).